Consider the following 183-residue polypeptide: Small ribosomal subunit protein uS4c (183 aa).

Residues 82 to 143 (MRLDNILFRL…KQRSKALIQN (62 aa)) enclose the S4 RNA-binding domain.

Belongs to the universal ribosomal protein uS4 family. In terms of assembly, part of the 30S ribosomal subunit. Contacts protein S5. The interaction surface between S4 and S5 is involved in control of translational fidelity.

The protein localises to the plastid. It localises to the chloroplast. Functionally, one of the primary rRNA binding proteins, it binds directly to 16S rRNA where it nucleates assembly of the body of the 30S subunit. With S5 and S12 plays an important role in translational accuracy. The protein is Small ribosomal subunit protein uS4c (rps4) of Crocosmia sp. (strain Porto Alegre 034).